Here is a 315-residue protein sequence, read N- to C-terminus: L-lactate dehydrogenase (315 aa).

Residues V14, D35, Y67, and 81 to 82 (GV) each bind NAD(+). Substrate contacts are provided by residues Q84, R91, and 123–126 (NPVD). NAD(+) is bound by residues 121–123 (ASN) and S146. 151-154 (DSAR) lines the substrate pocket. H178 acts as the Proton acceptor in catalysis. A Phosphotyrosine modification is found at Y219. T228 contributes to the substrate binding site.

Belongs to the LDH/MDH superfamily. LDH family. As to quaternary structure, homotetramer.

The protein localises to the cytoplasm. It carries out the reaction (S)-lactate + NAD(+) = pyruvate + NADH + H(+). It functions in the pathway fermentation; pyruvate fermentation to lactate; (S)-lactate from pyruvate: step 1/1. Catalyzes the conversion of lactate to pyruvate. The chain is L-lactate dehydrogenase from Malacoplasma penetrans (strain HF-2) (Mycoplasma penetrans).